The following is a 286-amino-acid chain: Small ribosomal subunit protein uS15m (286 aa).

The transit peptide at 1–33 (MSIVGRNAILNLRISLCPLFMGKRSFVSSPVSN) directs the protein to the mitochondrion.

It belongs to the universal ribosomal protein uS15 family. As to quaternary structure, component of the mitochondrial small ribosomal subunit (mt-SSU). Mature yeast 74S mitochondrial ribosomes consist of a small (37S) and a large (54S) subunit. The 37S small subunit contains a 15S ribosomal RNA (15S mt-rRNA) and 34 different proteins. The 54S large subunit contains a 21S rRNA (21S mt-rRNA) and 46 different proteins. Post-translationally, the precursor is processed in two steps involving mitochondrial intermediate peptidase (MIP) and mitochondrial processing peptidase (MPP).

Its subcellular location is the mitochondrion. Functionally, component of the mitochondrial ribosome (mitoribosome), a dedicated translation machinery responsible for the synthesis of mitochondrial genome-encoded proteins, including at least some of the essential transmembrane subunits of the mitochondrial respiratory chain. The mitoribosomes are attached to the mitochondrial inner membrane and translation products are cotranslationally integrated into the membrane. The sequence is that of Small ribosomal subunit protein uS15m (MRPS28) from Saccharomyces cerevisiae (strain ATCC 204508 / S288c) (Baker's yeast).